The following is a 445-amino-acid chain: Chromosome partition protein MukF (445 aa).

A leucine-zipper region spans residues 213–241; the sequence is LSETSATLRELQDTLQAAGDELQTQILDI.

It belongs to the MukF family. Interacts, and probably forms a ternary complex, with MukE and MukB via its C-terminal region. The complex formation is stimulated by calcium or magnesium. It is required for an interaction between MukE and MukB.

The protein localises to the cytoplasm. It localises to the nucleoid. Involved in chromosome condensation, segregation and cell cycle progression. May participate in facilitating chromosome segregation by condensation DNA from both sides of a centrally located replisome during cell division. Not required for mini-F plasmid partitioning. Probably acts via its interaction with MukB and MukE. Overexpression results in anucleate cells. It has a calcium binding activity. The sequence is that of Chromosome partition protein MukF from Vibrio cholerae serotype O1 (strain ATCC 39541 / Classical Ogawa 395 / O395).